The chain runs to 299 residues: MHCGPPDMVCETKIVATEDHEALPGAKKDALLAAAGAMWPPLPAAPGPAAAPPPAAGPQPHGGTGGAGPPEGRGVCIREFRAAEQEAARRIFYDGILERIPNTAFRGLRQHPRTQLLYALLAALCFAVTRSLLLTCLVPAGLLALRYYYSRKVILAYLECALHTDMADIEQYYMKPPGSCFWVAVLDGNVVGIVAARAHEEDNTVELLRMSVDSRFRGKGIAKALGRRVLEFAMLHNYSAVVLGTTAVKVAAHKLYESLGFRHMGASDHYVLPGMTLSLAERLFFQVRYHRYRLQLREE.

The span at 44–57 shows a compositional bias: pro residues; it reads AAPGPAAAPPPAAG. A disordered region spans residues 44-70; sequence AAPGPAAAPPPAAGPQPHGGTGGAGPP. The segment covering 60–70 has biased composition (gly residues); that stretch reads PHGGTGGAGPP. The helical transmembrane segment at 118–138 threads the bilayer; it reads YALLAALCFAVTRSLLLTCLV. An N-acetyltransferase domain is found at 143-280; it reads LALRYYYSRK…VLPGMTLSLA (138 aa).

It belongs to the NAT8 family. In terms of tissue distribution, expressed in brain, including in mesencephalic dopaminergic neurons of the substantia nigra and ventral tegmental area and oligodendrocytes. Expressed in cortical pyramidal neurons and granule cells of the hippocampus (at protein level).

Its subcellular location is the cytoplasm. The protein localises to the microsome membrane. The protein resides in the mitochondrion membrane. It localises to the endoplasmic reticulum membrane. The catalysed reaction is L-aspartate + acetyl-CoA = N-acetyl-L-aspartate + CoA + H(+). Its activity is regulated as follows. Aminooxyacetic acid (AOAA) blocks its activity in both cytoplasm and mitochondria. In terms of biological role, catalyzes the synthesis of N-acetylaspartate acid (NAA) from L-aspartate and acetyl-CoA. Promotes dopamine uptake by regulating TNF-alpha expression. Attenuates methamphetamine-induced inhibition of dopamine uptake. The sequence is that of N-acetylaspartate synthetase (Nat8l) from Rattus norvegicus (Rat).